The following is a 355-amino-acid chain: Protein RecA (355 aa).

67 to 74 (GPESSGKT) contacts ATP.

The protein belongs to the RecA family.

Its subcellular location is the cytoplasm. Functionally, can catalyze the hydrolysis of ATP in the presence of single-stranded DNA, the ATP-dependent uptake of single-stranded DNA by duplex DNA, and the ATP-dependent hybridization of homologous single-stranded DNAs. It interacts with LexA causing its activation and leading to its autocatalytic cleavage. In Shewanella baltica (strain OS195), this protein is Protein RecA.